Consider the following 69-residue polypeptide: uncharacterized protein (69 aa).

Its subcellular location is the mitochondrion. This is an uncharacterized protein from Marchantia polymorpha (Common liverwort).